A 316-amino-acid chain; its full sequence is Ribosomal RNA large subunit methyltransferase F (316 aa).

This sequence belongs to the methyltransferase superfamily. METTL16/RlmF family.

The protein resides in the cytoplasm. It catalyses the reaction adenosine(1618) in 23S rRNA + S-adenosyl-L-methionine = N(6)-methyladenosine(1618) in 23S rRNA + S-adenosyl-L-homocysteine + H(+). Its function is as follows. Specifically methylates the adenine in position 1618 of 23S rRNA. This is Ribosomal RNA large subunit methyltransferase F from Pseudomonas putida (strain W619).